Consider the following 310-residue polypeptide: tRNA-splicing endonuclease subunit Sen34 (310 aa).

The disordered stretch occupies residues 119 to 177 (GQAAKKQKLEQASGASSSQEAGSSQAAKEDETSDGQASGEQEEAGPSSSQAGPSNGVAP). A compositionally biased stretch (low complexity) spans 128–144 (EQASGASSSQEAGSSQA). Active-site residues include Tyr-247, His-255, and Lys-286.

The protein belongs to the tRNA-intron endonuclease family. TRNA splicing endonuclease is a heterotetramer composed of TSEN2, TSEN15, TSEN34/LENG5 and TSEN54. tRNA splicing endonuclease complex also contains proteins of the pre-mRNA 3'-end processing machinery such as CLP1, CPSF1, CPSF4 and CSTF2.

The protein localises to the nucleus. It is found in the nucleolus. The catalysed reaction is pretRNA = a 3'-half-tRNA molecule with a 5'-OH end + a 5'-half-tRNA molecule with a 2',3'-cyclic phosphate end + an intron with a 2',3'-cyclic phosphate and a 5'-hydroxyl terminus.. In terms of biological role, constitutes one of the two catalytic subunit of the tRNA-splicing endonuclease complex, a complex responsible for identification and cleavage of the splice sites in pre-tRNA. It cleaves pre-tRNA at the 5'- and 3'-splice sites to release the intron. The products are an intron and two tRNA half-molecules bearing 2',3'-cyclic phosphate and 5'-OH termini. There are no conserved sequences at the splice sites, but the intron is invariably located at the same site in the gene, placing the splice sites an invariant distance from the constant structural features of the tRNA body. It probably carries the active site for 3'-splice site cleavage. The tRNA splicing endonuclease is also involved in mRNA processing via its association with pre-mRNA 3'-end processing factors, establishing a link between pre-tRNA splicing and pre-mRNA 3'-end formation, suggesting that the endonuclease subunits function in multiple RNA-processing events. This is tRNA-splicing endonuclease subunit Sen34 (TSEN34) from Homo sapiens (Human).